Reading from the N-terminus, the 197-residue chain is Translation initiation factor IF-3 (197 aa).

It belongs to the IF-3 family. As to quaternary structure, monomer.

It is found in the cytoplasm. IF-3 binds to the 30S ribosomal subunit and shifts the equilibrium between 70S ribosomes and their 50S and 30S subunits in favor of the free subunits, thus enhancing the availability of 30S subunits on which protein synthesis initiation begins. The protein is Translation initiation factor IF-3 of Prosthecochloris aestuarii (strain DSM 271 / SK 413).